A 261-amino-acid chain; its full sequence is tRNA pseudouridine synthase A (261 aa).

The active-site Nucleophile is the Asp-51. A substrate-binding site is contributed by Tyr-109.

This sequence belongs to the tRNA pseudouridine synthase TruA family. In terms of assembly, homodimer.

The catalysed reaction is uridine(38/39/40) in tRNA = pseudouridine(38/39/40) in tRNA. Its function is as follows. Formation of pseudouridine at positions 38, 39 and 40 in the anticodon stem and loop of transfer RNAs. The sequence is that of tRNA pseudouridine synthase A from Shewanella sp. (strain ANA-3).